The following is a 374-amino-acid chain: Tryptophan--tRNA ligase (374 aa).

The 'HIGH' region signature appears at 81–89 (PSGPVHIGH). Positions 258–262 (KMSAS) match the 'KMSKS' region motif.

This sequence belongs to the class-I aminoacyl-tRNA synthetase family.

It is found in the cytoplasm. The enzyme catalyses tRNA(Trp) + L-tryptophan + ATP = L-tryptophyl-tRNA(Trp) + AMP + diphosphate + H(+). The polypeptide is Tryptophan--tRNA ligase (Pyrobaculum arsenaticum (strain DSM 13514 / JCM 11321 / PZ6)).